Consider the following 230-residue polypeptide: Porin OmpL (230 aa).

The N-terminal stretch at Met-1 to Ala-20 is a signal peptide.

This sequence belongs to the oligogalacturonate-specific porin KdgM (TC 1.B.35) family. OmpL subfamily.

The protein resides in the cell outer membrane. Outer membrane channel protein that allows an efficient diffusion of low-molecular-weight solutes such as small sugars and tetraglycine. However, the specific substrate recognized by the OmpL channel is unknown. This chain is Porin OmpL (ompL), found in Escherichia coli (strain K12).